The sequence spans 188 residues: Mitochondrial import inner membrane translocase subunit TIM23-2 (188 aa).

The next 4 membrane-spanning stretches (helical) occupy residues 64–84 (TGTA…ITGV), 112–131 (GNRI…GIVA), 138–154 (VWTS…VCRA), and 161–178 (AAVA…VVAG).

Belongs to the Tim17/Tim22/Tim23 family. Homomultimer. Component of the TIM17:23 complex at least composed of TIM23, TIM17 and TIM50. The complex interacts with the TIM44 component of the PAM complex. Also part of the NADH-ubiquinone oxidoreductase complex I. Interacts with OEP163, TIM17-2, TIM21, TIM50 and MPPA2. In terms of tissue distribution, expressed in roots and young cotyledons. Detected in leaves and flowers.

It is found in the mitochondrion inner membrane. Functionally, essential component of the TIM17:23 complex, a complex that mediates the translocation of transit peptide-containing proteins across the mitochondrial inner membrane. Links the inner and outer membranes. The polypeptide is Mitochondrial import inner membrane translocase subunit TIM23-2 (TIM23-2) (Arabidopsis thaliana (Mouse-ear cress)).